The primary structure comprises 94 residues: DNA-binding protein HU (94 aa).

It belongs to the bacterial histone-like protein family.

Histone-like DNA-binding protein which is capable of wrapping DNA to stabilize it, and thus to prevent its denaturation under extreme environmental conditions. In Xylella fastidiosa (strain 9a5c), this protein is DNA-binding protein HU (hup).